The chain runs to 97 residues: Large ribosomal subunit protein bL28 (97 aa).

It belongs to the bacterial ribosomal protein bL28 family.

This Brucella ovis (strain ATCC 25840 / 63/290 / NCTC 10512) protein is Large ribosomal subunit protein bL28.